A 679-amino-acid polypeptide reads, in one-letter code: Protein hook (679 aa).

Residues 6 to 123 form the Calponin-homology (CH) domain; sequence NEMYYSLLEW…RLLQLVLGCA (118 aa). Coiled coils occupy residues 135-437 and 480-574; these read EIMC…LKCG and QTAL…QEIL.

This sequence belongs to the hook family. As to quaternary structure, homodimer. Interacts with microtubules via its N-terminus.

It is found in the cytoplasm. The protein resides in the cytoskeleton. The protein localises to the endosome. Its subcellular location is the synapse. Its function is as follows. Involved in endocytic trafficking by stabilizing organelles of the endocytic pathway. Probably acts as a cytoskeletal linker protein required to tether endosome vesicles to the cytoskeleton. Involved in modulation of endocytosis at stages required for down-regulation of membrane proteins that control synapse size. Not involved in synaptic vesicle recycling. Required in R7 cells for boss endocytosis into multivesicular bodies (MVBs). Has a role in regulating adult longevity. The polypeptide is Protein hook (Drosophila erecta (Fruit fly)).